Here is a 29-residue protein sequence, read N- to C-terminus: U1-pseudomyrmecitoxin-Pt1 subunit SS1 (29 aa).

Belongs to the myrmexin family. Heterodimer composed of subunit SS1 and subunit LS1 (U1-PSDTX-Pt1b), and heterodimer composed of subunit SS1 and LS2 (U1-PSDTX-Pt1a); disulfide-linked. In terms of tissue distribution, expressed by the venom gland.

The protein localises to the secreted. In terms of biological role, this heterodimer may have anti-inflammatory properties, since the myrmexin complex (composed of 6 SS-LS heterodimers) inhibits carrageenin-induced edema in a dose-dependent manner (after subcutaneous injection into rats). The protein is U1-pseudomyrmecitoxin-Pt1 subunit SS1 of Pseudomyrmex triplarinus (Ant).